Reading from the N-terminus, the 168-residue chain is Vasopressin-neurophysin 2-copeptin (168 aa).

Positions 1–23 (MLAMMLNTTLSACFLSLLALTSA) are cleaved as a signal peptide. Cysteines 24 and 29 form a disulfide. Gly-32 bears the Glycine amide mark. 7 disulfides stabilise this stretch: Cys-45–Cys-89, Cys-48–Cys-62, Cys-56–Cys-79, Cys-63–Cys-69, Cys-96–Cys-108, Cys-102–Cys-120, and Cys-109–Cys-114. N-linked (GlcNAc...) asparagine glycosylation occurs at Asn-135.

This sequence belongs to the vasopressin/oxytocin family. Interacts with vasopressin receptors V1bR/AVPR1B (Ki=85 pM), V1aR/AVPR1A (Ki=0.6 nM) and V2R/AVPR2 (Ki=4.9 nM). Interacts with oxytocin receptor (OXTR) (Ki=110 nM).

It is found in the secreted. In terms of biological role, neurophysin 2 specifically binds vasopressin. Its function is as follows. Vasopressin has a direct antidiuretic action on the kidney, it also causes vasoconstriction of the peripheral vessels. Acts by binding to vasopressin receptors (V1bR/AVPR1B, V1aR/AVPR1A, and V2R/AVPR2). This Rattus norvegicus (Rat) protein is Vasopressin-neurophysin 2-copeptin (Avp).